We begin with the raw amino-acid sequence, 184 residues long: Large ribosomal subunit protein uL5 (184 aa).

Belongs to the universal ribosomal protein uL5 family. In terms of assembly, part of the 50S ribosomal subunit; part of the 5S rRNA/L5/L18/L25 subcomplex. Contacts the 5S rRNA and the P site tRNA. Forms a bridge to the 30S subunit in the 70S ribosome.

Its function is as follows. This is one of the proteins that bind and probably mediate the attachment of the 5S RNA into the large ribosomal subunit, where it forms part of the central protuberance. In the 70S ribosome it contacts protein S13 of the 30S subunit (bridge B1b), connecting the 2 subunits; this bridge is implicated in subunit movement. Contacts the P site tRNA; the 5S rRNA and some of its associated proteins might help stabilize positioning of ribosome-bound tRNAs. The protein is Large ribosomal subunit protein uL5 of Thermotoga sp. (strain RQ2).